A 462-amino-acid chain; its full sequence is ATP synthase subunit beta (462 aa).

Position 150 to 157 (150 to 157 (GGAGVGKT)) interacts with ATP.

The protein belongs to the ATPase alpha/beta chains family. In terms of assembly, F-type ATPases have 2 components, CF(1) - the catalytic core - and CF(0) - the membrane proton channel. CF(1) has five subunits: alpha(3), beta(3), gamma(1), delta(1), epsilon(1). CF(0) has three main subunits: a(1), b(2) and c(9-12). The alpha and beta chains form an alternating ring which encloses part of the gamma chain. CF(1) is attached to CF(0) by a central stalk formed by the gamma and epsilon chains, while a peripheral stalk is formed by the delta and b chains. In this bacterium the a and b subunits are transcribed but do not seem to be translated, thus the ATP synthase consists of the alpha, beta, gamma, delta, epsilon and c subunits.

The protein resides in the cell membrane. It carries out the reaction ATP + H2O + 4 H(+)(in) = ADP + phosphate + 5 H(+)(out). Its function is as follows. Produces ATP from ADP in the presence of a proton gradient across the membrane. The catalytic sites are hosted primarily by the beta subunits. This Moorella thermoacetica (strain ATCC 39073 / JCM 9320) protein is ATP synthase subunit beta.